The chain runs to 98 residues: Co-chaperonin GroES (98 aa).

It belongs to the GroES chaperonin family. In terms of assembly, heptamer of 7 subunits arranged in a ring. Interacts with the chaperonin GroEL.

The protein localises to the cytoplasm. Its function is as follows. Together with the chaperonin GroEL, plays an essential role in assisting protein folding. The GroEL-GroES system forms a nano-cage that allows encapsulation of the non-native substrate proteins and provides a physical environment optimized to promote and accelerate protein folding. GroES binds to the apical surface of the GroEL ring, thereby capping the opening of the GroEL channel. This is Co-chaperonin GroES from Allorhizobium ampelinum (strain ATCC BAA-846 / DSM 112012 / S4) (Agrobacterium vitis (strain S4)).